The following is a 340-amino-acid chain: CRISPR-associated protein Cas7 (340 aa).

In terms of assembly, component of the Cascade-like complex (Cascade I-B), composed of Cas5, Cas6, Cas7 and crRNA.

The protein localises to the cytoplasm. Its function is as follows. CRISPR (clustered regularly interspaced short palindromic repeat) is an adaptive immune system that provides protection against mobile genetic elements (viruses, transposable elements and conjugative plasmids). CRISPR clusters contain sequences complementary to antecedent mobile elements and target invading nucleic acids. CRISPR clusters are transcribed and processed into CRISPR RNA (crRNA). Plasmid targeted by CRISPR locus P1 transform wild-type cells very poorly. This protein helps process or stabilize pre-crRNA into individual crRNA units, in vivo Cas6 and Cas7 are also required for optimal crRNA processing and/or stability. In Haloferax volcanii (strain ATCC 29605 / DSM 3757 / JCM 8879 / NBRC 14742 / NCIMB 2012 / VKM B-1768 / DS2) (Halobacterium volcanii), this protein is CRISPR-associated protein Cas7.